The primary structure comprises 858 residues: DNA mismatch repair protein MutS (858 aa).

Gly-613–Ser-620 lines the ATP pocket.

The protein belongs to the DNA mismatch repair MutS family.

Functionally, this protein is involved in the repair of mismatches in DNA. It is possible that it carries out the mismatch recognition step. This protein has a weak ATPase activity. The protein is DNA mismatch repair protein MutS of Dehalococcoides mccartyi (strain ATCC BAA-2100 / JCM 16839 / KCTC 5957 / BAV1).